A 325-amino-acid chain; its full sequence is Elongation factor P--(R)-beta-lysine ligase (325 aa).

S76–E78 contributes to the substrate binding site. Residues R100 to E102 and N109 each bind ATP. Substrate is bound at residue Y118. E244–L245 is an ATP binding site. E251 is a substrate binding site. G300 contacts ATP.

Belongs to the class-II aminoacyl-tRNA synthetase family. EpmA subfamily. In terms of assembly, homodimer.

The catalysed reaction is D-beta-lysine + L-lysyl-[protein] + ATP = N(6)-((3R)-3,6-diaminohexanoyl)-L-lysyl-[protein] + AMP + diphosphate + H(+). Its function is as follows. With EpmB is involved in the beta-lysylation step of the post-translational modification of translation elongation factor P (EF-P) on 'Lys-34'. Catalyzes the ATP-dependent activation of (R)-beta-lysine produced by EpmB, forming a lysyl-adenylate, from which the beta-lysyl moiety is then transferred to the epsilon-amino group of EF-P 'Lys-34'. In Salmonella choleraesuis (strain SC-B67), this protein is Elongation factor P--(R)-beta-lysine ligase.